A 190-amino-acid chain; its full sequence is A-type ATP synthase subunit E (190 aa).

This sequence belongs to the V-ATPase E subunit family. In terms of assembly, has multiple subunits with at least A(3), B(3), C, D, E, F, H, I and proteolipid K(x).

It is found in the cell membrane. Its function is as follows. Component of the A-type ATP synthase that produces ATP from ADP in the presence of a proton gradient across the membrane. This is A-type ATP synthase subunit E from Pyrobaculum islandicum (strain DSM 4184 / JCM 9189 / GEO3).